Reading from the N-terminus, the 293-residue chain is MEGLAIRASRPSVFCSIPGLGGDSHRKPPSDGFLKLPASSIPADSRKLVANSTSFHPISAVNVSAQASLTADFPALSETILKEGRNNGKEKAENIVWHESSICRCDRQQLLQQKGCVVWITGLSGSGKSTVACALSKALFERGKLTYTLDGDNVRHGLNRDLTFKAEHRTENIRRIGEVAKLFADVGVICIASLISPYRRDRDACRSLLPDGDFVEVFMDVPLHVCESRDPKGLYKLARAGKIKGFTGIDDPYEAPVNCEVVLKHTGDDESCSPRQMAENIISYLQNKGYLEG.

A chloroplast-targeting transit peptide spans 1 to 59; sequence MEGLAIRASRPSVFCSIPGLGGDSHRKPPSDGFLKLPASSIPADSRKLVANSTSFHPIS. 122–130 provides a ligand contact to ATP; the sequence is GLSGSGKST. Residues Asp152, Arg155, Arg169, Asn172, 195–196, and Gly245 each bind substrate; that span reads IS. The Phosphoserine intermediate role is filled by Ser196.

Belongs to the APS kinase family. In terms of assembly, interacts with APK1. As to expression, expressed in root vasculature, root tips, leaf epidermal cells and funiculus of developing seeds.

It is found in the plastid. The protein localises to the chloroplast. The catalysed reaction is adenosine 5'-phosphosulfate + ATP = 3'-phosphoadenylyl sulfate + ADP + H(+). It participates in sulfur metabolism; hydrogen sulfide biosynthesis; sulfite from sulfate: step 2/3. Catalyzes the synthesis of activated sulfate. Essential for plant reproduction and viability. Required for the production of glucosinolates. The chain is Adenylyl-sulfate kinase 2, chloroplastic (APK2) from Arabidopsis thaliana (Mouse-ear cress).